The primary structure comprises 1430 residues: Transport and Golgi organization protein 1 (1430 aa).

An N-terminal signal peptide occupies residues 1-34 (MRLTNEKATMQPQLSDLALVLGLLICCLPTLTWA). The Extracellular portion of the chain corresponds to 35 to 796 (ATLSDKRLCA…ADKLVDHSQL (762 aa)). The SH3 domain occupies 50–112 (QIISMGIAKI…NKDFIMEKKI (63 aa)). 5 disordered regions span residues 253–272 (QEEP…PPLP), 284–303 (DFDY…SQDN), 318–362 (ESIE…SLPT), 445–524 (SDAE…DQQK), and 568–673 (EEAE…TDNH). Acidic residues predominate over residues 284–296 (DFDYGDDETDDDS). Basic and acidic residues-rich tracts occupy residues 331 to 357 (KKTD…KQED), 497 to 524 (LQEE…DQQK), and 568 to 588 (EEAE…RSSE). Residues 494–620 (YKQLQEEQEK…QSNEIVDNNN (127 aa)) are a coiled coil. Residues 594–621 (LSVQEANMQQLNDSVDSQSNEIVDNNNR) show a composition bias toward polar residues. The segment covering 640–651 (HPSTASHTTPTP) has biased composition (low complexity). A helical membrane pass occupies residues 797 to 817 (LLCVVIAAISSLFFMFAYYCF). Over 818 to 1430 (CNSSQEGALL…SATSRPYSEV (613 aa)) the chain is Cytoplasmic. Ser865 and Ser868 each carry phosphoserine. A coiled-coil region spans residues 869–1245 (NDMVADLKKQ…SLRRKLTTMA (377 aa)). Residues 1105–1114 (SQLQQSSQDV) are compositionally biased toward low complexity. Disordered stretches follow at residues 1105–1126 (SQLQ…QSER) and 1312–1430 (LPPT…YSEV). Residues 1115 to 1126 (EQLKQDFNQSER) are compositionally biased toward basic and acidic residues. Residues 1321–1334 (RPPPLGRMRSPPPS) are compositionally biased toward pro residues. The span at 1336-1346 (RGDRDRERYSD) shows a compositional bias: basic and acidic residues. Ser1345 and Ser1348 each carry phosphoserine. The segment covering 1348–1361 (SDYDDYDDDEEDDR) has biased composition (acidic residues). A compositionally biased stretch (basic residues) spans 1364 to 1380 (DRRRRHSGSWGRRHRGS). Over residues 1387–1402 (TYRSLSPSDSRYNYND) the composition is skewed to polar residues. 2 positions are modified to phosphoserine: Ser1390 and Ser1392. Pro residues predominate over residues 1408–1417 (SPPPSPPPVP). Residues 1420-1430 (RSATSRPYSEV) are compositionally biased toward polar residues.

The protein belongs to the MIA/OTOR family. Tango1 subfamily.

The protein localises to the golgi apparatus membrane. It localises to the golgi apparatus. It is found in the trans-Golgi network. Required for protein secretion. May participate in cargo loading by binding to COPII coat subunits and guiding SH3-bound proteins into a growing carrier. At basal transitional ER sites in follicle epithelial cells, mediates the exit of basal membrane protein such as vkg, LanB1 and Trol, from the endoplasmic reticulum (ER) to basal Golgi clusters. This chain is Transport and Golgi organization protein 1, found in Drosophila melanogaster (Fruit fly).